A 62-amino-acid polypeptide reads, in one-letter code: Large ribosomal subunit protein bL28 (62 aa).

The segment at 1-26 (MARKCYVTGKSPKSGNNRSHALNKTK) is disordered. The span at 11–20 (SPKSGNNRSH) shows a compositional bias: polar residues.

It belongs to the bacterial ribosomal protein bL28 family.

The protein is Large ribosomal subunit protein bL28 of Exiguobacterium sp. (strain ATCC BAA-1283 / AT1b).